The chain runs to 612 residues: Dihydroxy-acid dehydratase (612 aa).

Residue Asp81 coordinates Mg(2+). Cys122 lines the [2Fe-2S] cluster pocket. Positions 123 and 124 each coordinate Mg(2+). An N6-carboxylysine modification is found at Lys124. Residue Cys193 coordinates [2Fe-2S] cluster. Glu489 is a Mg(2+) binding site. The Proton acceptor role is filled by Ser515.

This sequence belongs to the IlvD/Edd family. In terms of assembly, homodimer. The cofactor is [2Fe-2S] cluster. It depends on Mg(2+) as a cofactor.

It catalyses the reaction (2R)-2,3-dihydroxy-3-methylbutanoate = 3-methyl-2-oxobutanoate + H2O. The catalysed reaction is (2R,3R)-2,3-dihydroxy-3-methylpentanoate = (S)-3-methyl-2-oxopentanoate + H2O. Its pathway is amino-acid biosynthesis; L-isoleucine biosynthesis; L-isoleucine from 2-oxobutanoate: step 3/4. It functions in the pathway amino-acid biosynthesis; L-valine biosynthesis; L-valine from pyruvate: step 3/4. Functions in the biosynthesis of branched-chain amino acids. Catalyzes the dehydration of (2R,3R)-2,3-dihydroxy-3-methylpentanoate (2,3-dihydroxy-3-methylvalerate) into 2-oxo-3-methylpentanoate (2-oxo-3-methylvalerate) and of (2R)-2,3-dihydroxy-3-methylbutanoate (2,3-dihydroxyisovalerate) into 2-oxo-3-methylbutanoate (2-oxoisovalerate), the penultimate precursor to L-isoleucine and L-valine, respectively. The chain is Dihydroxy-acid dehydratase from Stutzerimonas stutzeri (strain A1501) (Pseudomonas stutzeri).